Here is a 474-residue protein sequence, read N- to C-terminus: Shufflon protein A (474 aa).

The segment at 1–361 (MKKYDRGWAS…TGAILSCQSG (361 aa)) is constant region. The variable region stretch occupies residues 362–474 (TWKTSGSLNG…GVFSVFGYQT (113 aa)).

This chain is Shufflon protein A, found in Escherichia coli.